The primary structure comprises 525 residues: Erythropoietin receptor (525 aa).

An N-terminal signal peptide occupies residues 1–32 (MGAPSSLLFSTAHWRTVPFLLAFWVLLSTGTA). Over 33-249 (EDPTMTPEFL…TIATIIDLRL (217 aa)) the chain is Extracellular. Cys-58 and Cys-68 are joined by a disulfide. N-linked (GlcNAc...) asparagine glycosylation is found at Asn-77, Asn-100, Asn-149, and Asn-185. Cys-91 and Cys-107 are oxidised to a cystine. The region spanning 146–246 (PPLNVTVKEK…APITIATIID (101 aa)) is the Fibronectin type-III domain. The WSXWS motif motif lies at 232–236 (WSDWT). A helical membrane pass occupies residues 250–270 (LLLLSIAIFVALIAGVGVYIF). At 271-525 (MRHGMYLKHK…NFLAPIYSQS (255 aa)) the chain is on the cytoplasmic side. A Box 1 motif motif is present at residues 281–289 (VWPQVPTPE). Disordered stretches follow at residues 434–459 (APRM…QSIP) and 492–513 (LDMS…QNSP). The segment covering 447–459 (ENSVSSDGKQSIP) has biased composition (polar residues). Positions 487-492 (LKYAYL) match the ITIM motif motif.

Belongs to the type I cytokine receptor family. Type 1 subfamily. In terms of tissue distribution, expressed in the ventral blood island from stage 28 through to stage 36. Expressed in the circulating blood by stage 40. In the adult, highly expressed in peripheral blood cells including immature erythrocytes and basophils, and moderately expressed in the hematopoietic organs: liver, kidney and spleen. Expressed at a low level in adult brain.

It localises to the cell membrane. Receptor for erythropoietin. Mediates erythropoietin-induced erythroblast proliferation and differentiation. The sequence is that of Erythropoietin receptor from Xenopus laevis (African clawed frog).